A 382-amino-acid polypeptide reads, in one-letter code: S-adenosylmethionine synthase (382 aa).

Residue H15 participates in ATP binding. D17 contributes to the Mg(2+) binding site. E43 is a binding site for K(+). Positions 56 and 99 each coordinate L-methionine. Positions 99 to 109 (QSGDIAQGVDR) are flexible loop. Residues 164 to 166 (DAK), 230 to 231 (KF), D239, 245 to 246 (RK), A262, and K266 each bind ATP. D239 lines the L-methionine pocket. An L-methionine-binding site is contributed by K270.

The protein belongs to the AdoMet synthase family. As to quaternary structure, homotetramer; dimer of dimers. Requires Mg(2+) as cofactor. K(+) is required as a cofactor.

It is found in the cytoplasm. It catalyses the reaction L-methionine + ATP + H2O = S-adenosyl-L-methionine + phosphate + diphosphate. Its pathway is amino-acid biosynthesis; S-adenosyl-L-methionine biosynthesis; S-adenosyl-L-methionine from L-methionine: step 1/1. In terms of biological role, catalyzes the formation of S-adenosylmethionine (AdoMet) from methionine and ATP. The overall synthetic reaction is composed of two sequential steps, AdoMet formation and the subsequent tripolyphosphate hydrolysis which occurs prior to release of AdoMet from the enzyme. This is S-adenosylmethionine synthase from Dichelobacter nodosus (strain VCS1703A).